A 233-amino-acid chain; its full sequence is Small ribosomal subunit protein uS3 (233 aa).

The 69-residue stretch at 39–107 folds into the KH type-2 domain; the sequence is VRQYLTKELA…PAQINIAEVR (69 aa).

The protein belongs to the universal ribosomal protein uS3 family. Part of the 30S ribosomal subunit. Forms a tight complex with proteins S10 and S14.

Binds the lower part of the 30S subunit head. Binds mRNA in the 70S ribosome, positioning it for translation. This chain is Small ribosomal subunit protein uS3, found in Citrobacter koseri (strain ATCC BAA-895 / CDC 4225-83 / SGSC4696).